The chain runs to 214 residues: ATP-dependent Clp protease proteolytic subunit (214 aa).

Residue Ser-106 is the Nucleophile of the active site. His-131 is a catalytic residue.

The protein belongs to the peptidase S14 family. Fourteen ClpP subunits assemble into 2 heptameric rings which stack back to back to give a disk-like structure with a central cavity, resembling the structure of eukaryotic proteasomes.

The protein localises to the cytoplasm. It catalyses the reaction Hydrolysis of proteins to small peptides in the presence of ATP and magnesium. alpha-casein is the usual test substrate. In the absence of ATP, only oligopeptides shorter than five residues are hydrolyzed (such as succinyl-Leu-Tyr-|-NHMec, and Leu-Tyr-Leu-|-Tyr-Trp, in which cleavage of the -Tyr-|-Leu- and -Tyr-|-Trp bonds also occurs).. Cleaves peptides in various proteins in a process that requires ATP hydrolysis. Has a chymotrypsin-like activity. Plays a major role in the degradation of misfolded proteins. The sequence is that of ATP-dependent Clp protease proteolytic subunit from Rhodopseudomonas palustris (strain BisB5).